The following is a 774-amino-acid chain: Ion-translocating oxidoreductase complex subunit C (774 aa).

4Fe-4S ferredoxin-type domains are found at residues 369–397 and 407–436; these read GEPQ…QQLY and KATT…VQYF. [4Fe-4S] cluster contacts are provided by cysteine 377, cysteine 380, cysteine 383, cysteine 387, cysteine 416, cysteine 419, cysteine 422, and cysteine 426. Positions 602 to 750 are disordered; it reads KLEQQQANAE…EPEEQIDPRK (149 aa).

This sequence belongs to the 4Fe4S bacterial-type ferredoxin family. RnfC subfamily. In terms of assembly, the complex is composed of six subunits: RsxA, RsxB, RsxC, RsxD, RsxE and RsxG. The cofactor is [4Fe-4S] cluster.

The protein localises to the cell inner membrane. In terms of biological role, part of a membrane-bound complex that couples electron transfer with translocation of ions across the membrane. Required to maintain the reduced state of SoxR. This chain is Ion-translocating oxidoreductase complex subunit C, found in Escherichia coli O6:K15:H31 (strain 536 / UPEC).